A 244-amino-acid chain; its full sequence is Probable cytokinin riboside 5'-monophosphate phosphoribohydrolase LOGL2 (244 aa).

Substrate is bound by residues Glu91, 109–110 (RK), and 126–132 (GYGTLEE).

Belongs to the LOG family.

It carries out the reaction N(6)-(dimethylallyl)adenosine 5'-phosphate + H2O = N(6)-dimethylallyladenine + D-ribose 5-phosphate. It catalyses the reaction 9-ribosyl-trans-zeatin 5'-phosphate + H2O = trans-zeatin + D-ribose 5-phosphate. In terms of biological role, cytokinin-activating enzyme working in the direct activation pathway. Phosphoribohydrolase that converts inactive cytokinin nucleotides to the biologically active free-base forms. This is Probable cytokinin riboside 5'-monophosphate phosphoribohydrolase LOGL2 (LOGL2) from Oryza sativa subsp. japonica (Rice).